Consider the following 1816-residue polypeptide: Kinesin-like protein KIF1B (1816 aa).

An N-acetylserine modification is found at serine 2. Positions serine 5–isoleucine 354 constitute a Kinesin motor domain. Glycine 97 to serine 104 contributes to the ATP binding site. An interaction with KIFBP region spans residues asparagine 270–arginine 350. Coiled coils occupy residues asparagine 365–glutamine 386 and glycine 470–arginine 502. One can recognise an FHA domain in the interval threonine 556–valine 612. Phosphothreonine is present on residues threonine 647 and threonine 652. Coiled-coil stretches lie at residues glutamate 668 to valine 737 and serine 841 to aspartate 869. Residues serine 1054, serine 1057, serine 1416, serine 1454, and serine 1487 each carry the phosphoserine modification. Residues valine 1522 to valine 1571 are disordered. Over residues serine 1525–threonine 1553 the composition is skewed to low complexity. Residues phenylalanine 1554–tyrosine 1566 are compositionally biased toward polar residues. A phosphoserine mark is found at serine 1573, serine 1603, serine 1610, and serine 1613. The segment covering serine 1620–serine 1637 has biased composition (low complexity). The tract at residues serine 1620 to serine 1659 is disordered. Over residues aspartate 1640 to serine 1659 the composition is skewed to polar residues. The PH domain maps to valine 1702–alanine 1799.

The protein belongs to the TRAFAC class myosin-kinesin ATPase superfamily. Kinesin family. Unc-104 subfamily. Monomer. Interacts with KIFBP; positively regulates KIF1B microtubule motor activity. Interacts (via C-terminus end of the kinesin-motor domain) with CHP1; the interaction occurs in a calcium-dependent manner. In terms of assembly, interacts with MADD (via death domain); links this isoform to Rab3-carrying vesicles in anterograde synaptic vesicle transport. As to expression, expressed in the brain (at protein level).

The protein resides in the cytoplasm. The protein localises to the cytoskeleton. Its subcellular location is the cytoplasmic vesicle. It is found in the secretory vesicle. It localises to the synaptic vesicle membrane. The protein resides in the mitochondrion. It catalyses the reaction ATP + H2O + a kinesin associated with a microtubule at position (n) = ADP + phosphate a kinesin associated with a microtubule at position (n+1, toward the plus end).. In terms of biological role, has a plus-end-directed microtubule motor activity and functions as a motor for transport of vesicles and organelles along microtubules. Its function is as follows. Has a plus-end-directed microtubule motor activity and functions as a motor for anterograde synaptic vesicle transport along axonal microtubules from the cell body to the presynapse in neuronal cells. Functions as a downstream effector in a developmental apoptotic pathway that is activated when nerve growth factor (NGF) becomes limiting for neuronal progenitor cells. Has a plus-end-directed microtubule motor activity and functions as a motor for anterograde transport of mitochondria. The polypeptide is Kinesin-like protein KIF1B (Mus musculus (Mouse)).